The chain runs to 317 residues: NADH-ubiquinone oxidoreductase chain 1 (317 aa).

Helical transmembrane passes span 3–23 (YIEL…LTVA), 37–57 (PNAV…KLLL), 69–89 (LILF…WSVI), 103–123 (GFIL…LAGW), 141–161 (LISY…IGGT), 173–193 (AIWY…GCVA), 207–227 (SELV…LFFL), 247–267 (GGTG…YIWV), and 282–302 (LCWM…PAYL).

Belongs to the complex I subunit 1 family.

The protein localises to the mitochondrion inner membrane. It catalyses the reaction a ubiquinone + NADH + 5 H(+)(in) = a ubiquinol + NAD(+) + 4 H(+)(out). Functionally, core subunit of the mitochondrial membrane respiratory chain NADH dehydrogenase (Complex I) that is believed to belong to the minimal assembly required for catalysis. Complex I functions in the transfer of electrons from NADH to the respiratory chain. The immediate electron acceptor for the enzyme is believed to be ubiquinone. This Candida albicans (strain SC5314 / ATCC MYA-2876) (Yeast) protein is NADH-ubiquinone oxidoreductase chain 1 (NAD1).